A 560-amino-acid polypeptide reads, in one-letter code: MSLTVEIVATKPYEGQKPGTSGLRKKVKVFTQPNYTENFVQAILEANGAALAGSTLVVGGDGRFYCKEAAELIVRLSAANGVSKLLVGQNGILSTPAVSSLIRHNKALGGIVLTASHNPGGPENDFGIKFNCENGGPAPDAFTNHIYKITTEIKEYKLVRNLQIDISKVGVTSFDIAGKPFTVEVIDSVANYVRHMEEIFDFAKLKDFVSGKATGKPLKMRIDAMNGVTGSYVREIFLNRLGATESSVVHTTPLPDFGGLHPDPNLTYAKDLVDTVAQGDYDIGAAFDGDGDRNMIIGSKAFFVTPSDSLAVIAHYLEAIPYFQKNGVQGFARSMPTASAVDLVGRKLGKEVFEVPTGWKYFGNLMDAGRLCLCGEESFGTGSNHIREKDGIWAVLAWISVMQHTGKGIEDILKQHWSVYGRNYFTRYDYEECASDPCNEMVATMEKTITAPEFVGKSYSSGGKTYKVKEADNFSYTDPVDKSVATKQGLRIVFEDGSRIVVRLSGTGSSGATVRLYIDSYEKENVLGQASVMLKPLIDIALEISQLPKFTGRNAPTVIT.

Arg24 and Ser116 together coordinate alpha-D-glucose 1,6-bisphosphate. Ser116 acts as the Phosphoserine intermediate in catalysis. Residues Ser116, Asp288, Asp290, and Asp292 each coordinate Mg(2+). Ser116 carries the phosphoserine modification. 6 residues coordinate alpha-D-glucose 1,6-bisphosphate: Asp292, Arg293, Thr357, Glu376, Ser378, and Lys389.

It belongs to the phosphohexose mutase family. As to quaternary structure, monomer. The cofactor is Mg(2+). Localized primarily to fat bodies in third instar larvae.

The enzyme catalyses alpha-D-glucose 1-phosphate = alpha-D-glucose 6-phosphate. It catalyses the reaction O-phospho-L-seryl-[protein] + alpha-D-glucose 1-phosphate = alpha-D-glucose 1,6-bisphosphate + L-seryl-[protein]. It carries out the reaction alpha-D-glucose 1,6-bisphosphate + L-seryl-[protein] = O-phospho-L-seryl-[protein] + alpha-D-glucose 6-phosphate. Functionally, catalyzes the reversible isomerization of alpha-D-glucose 1-phosphate to alpha-D-glucose 6-phosphate. The mechanism proceeds via the intermediate compound alpha-D-glucose 1,6-bisphosphate. This enzyme participates in both the breakdown and synthesis of glucose. Enzyme of the glycolytic pathway. Glycolysis is essential in glial cells but not in neurons; neurons rely on the citric acid cycle for their energy needs, and on lactate and alanine secreted into the hemolymph by glial cells to fuel it. The sequence is that of Phosphoglucomutase 1 from Drosophila melanogaster (Fruit fly).